Consider the following 434-residue polypeptide: UDP-N-acetylenolpyruvoylglucosamine reductase (434 aa).

The FAD-binding PCMH-type domain occupies 51–238 (IGAAPAGVVE…TAVEFQLTTD (188 aa)). Arg-216 is an active-site residue. The Proton donor role is filled by Ser-299. The active site involves Glu-425.

The protein belongs to the MurB family. It depends on FAD as a cofactor.

The protein resides in the cytoplasm. It catalyses the reaction UDP-N-acetyl-alpha-D-muramate + NADP(+) = UDP-N-acetyl-3-O-(1-carboxyvinyl)-alpha-D-glucosamine + NADPH + H(+). It functions in the pathway cell wall biogenesis; peptidoglycan biosynthesis. Its function is as follows. Cell wall formation. This chain is UDP-N-acetylenolpyruvoylglucosamine reductase, found in Corynebacterium jeikeium (strain K411).